We begin with the raw amino-acid sequence, 432 residues long: Enolase (432 aa).

Q167 is a binding site for (2R)-2-phosphoglycerate. E209 serves as the catalytic Proton donor. Residues D246, E290, and D317 each coordinate Mg(2+). (2R)-2-phosphoglycerate contacts are provided by K342, R371, S372, and K393. K342 acts as the Proton acceptor in catalysis.

This sequence belongs to the enolase family. In terms of assembly, component of the RNA degradosome, a multiprotein complex involved in RNA processing and mRNA degradation. Mg(2+) is required as a cofactor.

The protein resides in the cytoplasm. It localises to the secreted. The protein localises to the cell surface. It catalyses the reaction (2R)-2-phosphoglycerate = phosphoenolpyruvate + H2O. It participates in carbohydrate degradation; glycolysis; pyruvate from D-glyceraldehyde 3-phosphate: step 4/5. Functionally, catalyzes the reversible conversion of 2-phosphoglycerate (2-PG) into phosphoenolpyruvate (PEP). It is essential for the degradation of carbohydrates via glycolysis. The polypeptide is Enolase (Shigella sonnei (strain Ss046)).